The primary structure comprises 234 residues: Cytochrome b (234 aa).

The next 4 helical transmembrane spans lie at 33-53 (FGSL…FLAM), 77-98 (WLIR…YMHV), 113-133 (WNIG…GYVL), and 178-198 (FFAF…IHLL). Residues His-83 and His-97 each contribute to the heme b site. Heme b is bound by residues His-182 and His-196. His-201 lines the a ubiquinone pocket. Residues 226 to 234 (IKDVLGFLM) traverse the membrane as a helical segment.

Belongs to the cytochrome b family. In terms of assembly, the cytochrome bc1 complex contains 11 subunits: 3 respiratory subunits (MT-CYB, CYC1 and UQCRFS1), 2 core proteins (UQCRC1 and UQCRC2) and 6 low-molecular weight proteins (UQCRH/QCR6, UQCRB/QCR7, UQCRQ/QCR8, UQCR10/QCR9, UQCR11/QCR10 and a cleavage product of UQCRFS1). This cytochrome bc1 complex then forms a dimer. Heme b serves as cofactor.

Its subcellular location is the mitochondrion inner membrane. In terms of biological role, component of the ubiquinol-cytochrome c reductase complex (complex III or cytochrome b-c1 complex) that is part of the mitochondrial respiratory chain. The b-c1 complex mediates electron transfer from ubiquinol to cytochrome c. Contributes to the generation of a proton gradient across the mitochondrial membrane that is then used for ATP synthesis. In Lepus alleni (Antelope jackrabbit), this protein is Cytochrome b (MT-CYB).